A 209-amino-acid chain; its full sequence is Small ribosomal subunit protein uS4 (209 aa).

The disordered stretch occupies residues 22-45 (RGRNPLLRKPNPPGQHGMQRKKKS). Positions 93 to 154 (CRLDSIVYRL…KSKRLAIVTE (62 aa)) constitute an S4 RNA-binding domain.

Belongs to the universal ribosomal protein uS4 family. Part of the 30S ribosomal subunit. Contacts protein S5. The interaction surface between S4 and S5 is involved in control of translational fidelity.

Functionally, one of the primary rRNA binding proteins, it binds directly to 16S rRNA where it nucleates assembly of the body of the 30S subunit. With S5 and S12 plays an important role in translational accuracy. The sequence is that of Small ribosomal subunit protein uS4 from Chlamydia trachomatis serovar L2 (strain ATCC VR-902B / DSM 19102 / 434/Bu).